The chain runs to 169 residues: uncharacterized protein (169 aa).

This is an uncharacterized protein from Saimiriine herpesvirus 2 (strain 11) (SaHV-2).